Here is a 205-residue protein sequence, read N- to C-terminus: N-(5'-phosphoribosyl)anthranilate isomerase (205 aa).

The protein belongs to the TrpF family.

It carries out the reaction N-(5-phospho-beta-D-ribosyl)anthranilate = 1-(2-carboxyphenylamino)-1-deoxy-D-ribulose 5-phosphate. It participates in amino-acid biosynthesis; L-tryptophan biosynthesis; L-tryptophan from chorismate: step 3/5. This is N-(5'-phosphoribosyl)anthranilate isomerase from Acidiphilium cryptum (strain JF-5).